A 145-amino-acid chain; its full sequence is Large ribosomal subunit protein uL24 (145 aa).

The segment at 108-145 is disordered; that stretch reads EPIQEEQQKTEETKQEIAPEEVEAKEAQDKQEVKENDQ. Positions 113 to 145 are enriched in basic and acidic residues; that stretch reads EQQKTEETKQEIAPEEVEAKEAQDKQEVKENDQ.

It belongs to the universal ribosomal protein uL24 family. Part of the 50S ribosomal subunit.

One of two assembly initiator proteins, it binds directly to the 5'-end of the 23S rRNA, where it nucleates assembly of the 50S subunit. Functionally, located at the polypeptide exit tunnel on the outside of the subunit. In Thermoplasma volcanium (strain ATCC 51530 / DSM 4299 / JCM 9571 / NBRC 15438 / GSS1), this protein is Large ribosomal subunit protein uL24 (rpl24).